Consider the following 197-residue polypeptide: Isopentenyl-diphosphate Delta-isomerase (197 aa).

Mn(2+) contacts are provided by histidine 41 and histidine 48. In terms of domain architecture, Nudix hydrolase spans 46 to 183 (RLHRAFSVFL…AWFMTVLDAA (138 aa)). Cysteine 83 is an active-site residue. Cysteine 83 provides a ligand contact to Mg(2+). Histidine 85 is a binding site for Mn(2+). Residue glutamate 103 coordinates Mg(2+). Mn(2+)-binding residues include glutamate 130 and glutamate 132. Glutamate 132 is a catalytic residue.

The protein belongs to the IPP isomerase type 1 family. Mg(2+) is required as a cofactor. The cofactor is Mn(2+).

The protein localises to the cytoplasm. The catalysed reaction is isopentenyl diphosphate = dimethylallyl diphosphate. The protein operates within isoprenoid biosynthesis; dimethylallyl diphosphate biosynthesis; dimethylallyl diphosphate from isopentenyl diphosphate: step 1/1. In terms of biological role, catalyzes the 1,3-allylic rearrangement of the homoallylic substrate isopentenyl (IPP) to its highly electrophilic allylic isomer, dimethylallyl diphosphate (DMAPP). The chain is Isopentenyl-diphosphate Delta-isomerase from Streptomyces coelicolor (strain ATCC BAA-471 / A3(2) / M145).